The sequence spans 145 residues: Hemoglobin subunit beta (145 aa).

The 145-residue stretch at 1 to 145 (MLTAEEKAAV…VANALAHRYH (145 aa)) folds into the Globin domain. Phosphothreonine is present on T11. N6-acetyllysine is present on K58. H62 is a binding site for heme b. K81 is subject to N6-acetyllysine. H91 is a heme b binding site. C92 carries the S-nitrosocysteine modification.

This sequence belongs to the globin family. As to quaternary structure, heterotetramer of two alpha chains and two beta chains. Red blood cells.

Involved in oxygen transport from the lung to the various peripheral tissues. The sequence is that of Hemoglobin subunit beta (HBB) from Alces alces alces (European moose).